A 274-amino-acid polypeptide reads, in one-letter code: Proliferating cell nuclear antigen 1 (274 aa).

Residues R61 to K80 mediate DNA binding.

This sequence belongs to the PCNA family. In terms of assembly, homotrimer. Interacts with ORC1 (via PIP-box motif); the interaction occurs during DNA replication in trophozoites. Interacts with ORC5; the interaction occurs during the trophozoite stage but not at the late schizont stage. Interacts with FEN1.

The protein resides in the nucleus. It is found in the chromosome. It localises to the cytoplasm. Functionally, auxiliary protein of DNA polymerase delta and is involved in the control of DNA replication by increasing the polymerase processibility during elongation of the leading strand. Involved in DNA damage response. This is Proliferating cell nuclear antigen 1 from Plasmodium falciparum (isolate 3D7).